The sequence spans 367 residues: ELAV-like protein 3 (367 aa).

RRM domains lie at 39–117 (TNLI…YARP), 125–205 (ANLY…FANN), and 284–362 (WCIF…FKTS).

The protein belongs to the RRM elav family. In terms of assembly, interacts with MAP1B light chain LC1. As to expression, brain specific.

Its function is as follows. RNA-binding protein that binds to AU-rich element (ARE) sequences of target mRNAs, including VEGF mRNA. May also bind poly-A tracts via RRM 3. May be involved in neuronal differentiation and maintenance. Plays a role in the stabilization of GAP43 mRNA and in spatial learning. This is ELAV-like protein 3 (ELAVL3) from Homo sapiens (Human).